We begin with the raw amino-acid sequence, 263 residues long: Hydroxyethylthiazole kinase (263 aa).

A substrate-binding site is contributed by M39. The ATP site is built by K115 and T160. A substrate-binding site is contributed by G187.

Belongs to the Thz kinase family. The cofactor is Mg(2+).

The catalysed reaction is 5-(2-hydroxyethyl)-4-methylthiazole + ATP = 4-methyl-5-(2-phosphooxyethyl)-thiazole + ADP + H(+). Its pathway is cofactor biosynthesis; thiamine diphosphate biosynthesis; 4-methyl-5-(2-phosphoethyl)-thiazole from 5-(2-hydroxyethyl)-4-methylthiazole: step 1/1. Functionally, catalyzes the phosphorylation of the hydroxyl group of 4-methyl-5-beta-hydroxyethylthiazole (THZ). The sequence is that of Hydroxyethylthiazole kinase from Staphylococcus aureus (strain bovine RF122 / ET3-1).